The following is a 202-amino-acid chain: Protein-methionine-sulfoxide reductase heme-binding subunit MsrQ (202 aa).

Transmembrane regions (helical) follow at residues 8–28 (YAWLGPGVVLGGLLPTVFLLW), 50–70 (LALIVLTLSLACTPARVWLGW), 76–96 (IRKALGLLAAFYAVLHFGIYL), 114–134 (PFITSGFAALLLLLPLVLTSG), 148–168 (LLHRLVYLAAALGALHYWWGV), and 174–194 (GPLLAVLVLAALGLARLKTPA).

It belongs to the MsrQ family. Heterodimer of a catalytic subunit (MsrP) and a heme-binding subunit (MsrQ). FMN is required as a cofactor. Heme b serves as cofactor.

It localises to the cell membrane. Part of the MsrPQ system that repairs oxidized cell envelope proteins containing methionine sulfoxide residues (Met-O), using respiratory chain electrons. Thus protects these proteins from oxidative-stress damage caused by reactive species of oxygen and chlorine. MsrPQ is essential for the maintenance of envelope integrity under bleach stress, rescuing a wide series of structurally unrelated cell envelope proteins from methionine oxidation. MsrQ provides electrons for reduction to the reductase catalytic subunit MsrP, using the quinone pool of the respiratory chain. This is Protein-methionine-sulfoxide reductase heme-binding subunit MsrQ from Deinococcus radiodurans (strain ATCC 13939 / DSM 20539 / JCM 16871 / CCUG 27074 / LMG 4051 / NBRC 15346 / NCIMB 9279 / VKM B-1422 / R1).